The following is a 492-amino-acid chain: ATP synthase subunit beta, chloroplastic (492 aa).

An ATP-binding site is contributed by 170 to 177 (GGAGVGKT).

The protein belongs to the ATPase alpha/beta chains family. F-type ATPases have 2 components, CF(1) - the catalytic core - and CF(0) - the membrane proton channel. CF(1) has five subunits: alpha(3), beta(3), gamma(1), delta(1), epsilon(1). CF(0) has four main subunits: a(1), b(1), b'(1) and c(9-12).

It localises to the plastid. It is found in the chloroplast thylakoid membrane. It carries out the reaction ATP + H2O + 4 H(+)(in) = ADP + phosphate + 5 H(+)(out). Its function is as follows. Produces ATP from ADP in the presence of a proton gradient across the membrane. The catalytic sites are hosted primarily by the beta subunits. In Psilotum nudum (Whisk fern), this protein is ATP synthase subunit beta, chloroplastic.